A 538-amino-acid polypeptide reads, in one-letter code: Histone-arginine methyltransferase CARMER (538 aa).

Residues 148–457 enclose the SAM-dependent MTase PRMT-type domain; sequence ASQYFQFYGY…QSYDVTIDLH (310 aa). S-adenosyl-L-methionine-binding residues include glutamine 161, arginine 170, glycine 194, glutamate 216, glutamate 245, and threonine 273. Asymmetric dimethylarginine; by autocatalysis is present on arginine 508.

Belongs to the class I-like SAM-binding methyltransferase superfamily. Protein arginine N-methyltransferase family. Homodimer. The dimethylated protein is the major form.

Its subcellular location is the cytoplasm. The protein localises to the nucleus. The catalysed reaction is L-arginyl-[protein] + 2 S-adenosyl-L-methionine = N(omega),N(omega)-dimethyl-L-arginyl-[protein] + 2 S-adenosyl-L-homocysteine + 2 H(+). Methylates (mono- and asymmetric dimethylation) the guanidino nitrogens of arginyl residues in proteins. May methylate histone H3 at 'Arg-17' and activate transcription via chromatin remodeling. This chain is Histone-arginine methyltransferase CARMER (Art4), found in Drosophila virilis (Fruit fly).